We begin with the raw amino-acid sequence, 541 residues long: Glucose-6-phosphate isomerase (541 aa).

E346 (proton donor) is an active-site residue. Catalysis depends on residues H377 and K506.

The protein belongs to the GPI family.

Its subcellular location is the cytoplasm. The catalysed reaction is alpha-D-glucose 6-phosphate = beta-D-fructose 6-phosphate. Its pathway is carbohydrate biosynthesis; gluconeogenesis. It functions in the pathway carbohydrate degradation; glycolysis; D-glyceraldehyde 3-phosphate and glycerone phosphate from D-glucose: step 2/4. In terms of biological role, catalyzes the reversible isomerization of glucose-6-phosphate to fructose-6-phosphate. This Rhizobium johnstonii (strain DSM 114642 / LMG 32736 / 3841) (Rhizobium leguminosarum bv. viciae) protein is Glucose-6-phosphate isomerase.